The primary structure comprises 572 residues: Acetyl-coenzyme A synthetase (572 aa).

Thr260 contributes to the CoA binding site. Residues 333–335 (GEP), 354–359 (DTWWMT), Asp440, and Arg455 contribute to the ATP site. Ser463 serves as a coordination point for CoA. Residue Arg466 participates in ATP binding. Mg(2+) contacts are provided by Val477, His479, and Ile482. CoA is bound at residue Lys524. Position 549 is an N6-acetyllysine (Lys549).

This sequence belongs to the ATP-dependent AMP-binding enzyme family. Interacts with FloT. The cofactor is Mg(2+). Post-translationally, acetylated. Deacetylation by the SIR2-homolog deacetylase activates the enzyme.

Its subcellular location is the cell membrane. The protein resides in the membrane raft. The catalysed reaction is acetate + ATP + CoA = acetyl-CoA + AMP + diphosphate. Functionally, catalyzes the conversion of acetate into acetyl-CoA (AcCoA), an essential intermediate at the junction of anabolic and catabolic pathways. AcsA undergoes a two-step reaction. In the first half reaction, AcsA combines acetate with ATP to form acetyl-adenylate (AcAMP) intermediate. In the second half reaction, it can then transfer the acetyl group from AcAMP to the sulfhydryl group of CoA, forming the product AcCoA. Has a role in growth and sporulation on acetate. This chain is Acetyl-coenzyme A synthetase (acsA), found in Bacillus subtilis (strain 168).